We begin with the raw amino-acid sequence, 477 residues long: Aspartyl/glutamyl-tRNA(Asn/Gln) amidotransferase subunit B (477 aa).

Belongs to the GatB/GatE family. GatB subfamily. As to quaternary structure, heterotrimer of A, B and C subunits.

The enzyme catalyses L-glutamyl-tRNA(Gln) + L-glutamine + ATP + H2O = L-glutaminyl-tRNA(Gln) + L-glutamate + ADP + phosphate + H(+). It catalyses the reaction L-aspartyl-tRNA(Asn) + L-glutamine + ATP + H2O = L-asparaginyl-tRNA(Asn) + L-glutamate + ADP + phosphate + 2 H(+). In terms of biological role, allows the formation of correctly charged Asn-tRNA(Asn) or Gln-tRNA(Gln) through the transamidation of misacylated Asp-tRNA(Asn) or Glu-tRNA(Gln) in organisms which lack either or both of asparaginyl-tRNA or glutaminyl-tRNA synthetases. The reaction takes place in the presence of glutamine and ATP through an activated phospho-Asp-tRNA(Asn) or phospho-Glu-tRNA(Gln). This chain is Aspartyl/glutamyl-tRNA(Asn/Gln) amidotransferase subunit B, found in Streptococcus gordonii (strain Challis / ATCC 35105 / BCRC 15272 / CH1 / DL1 / V288).